We begin with the raw amino-acid sequence, 1026 residues long: MRLPWELLVLQSFILCLADDSTLHGPIFIQEPSPVMFPLDSEEKKVKLNCEVKGNPKPHIRWKLNGTDVDTGMDFRYSVVEGSLLINNPNKTQDAGTYQCTATNSFGTIVSREAKLQFAYLDNFKTRTRSTVSVRRGQGMVLLCGPPPHSGELSYAWIFNEYPSYQDNRRFVSQETGNLYIAKVEKSDVGNYTCVVTNTVTNHKVLGPPTPLILRNDGVMGEYEPKIEVQFPETVPTAKGATVKLECFALGNPVPTIIWRRADGKPIARKARRHKSNGILEIPNFQQEDAGLYECVAENSRGKNVARGQLTFYAQPNWIQKINDIHVAMEENVFWECKANGRPKPTYKWLKNGEPLLTRDRIQIEQGTLNITIVNLSDAGMYQCLAENKHGVIFSNAELSVIAVGPDFSRTLLKRVTLVKVGGEVVIECKPKASPKPVYTWKKGRDILKENERITISEDGNLRIINVTKSDAGSYTCIATNHFGTASSTGNLVVKDPTRVMVPPSSMDVTVGESIVLPCQVTHDHSLDIVFTWSFNGHLIDFDRDGDHFERVGGQDSAGDLMIRNIQLKHAGKYVCMVQTSVDRLSAAADLIVRGPPGPPEAVTIDEITDTTAQLSWRPGPDNHSPITMYVIQARTPFSVGWQAVSTVPELIDGKTFTATVVGLNPWVEYEFRTVAANVIGIGEPSRPSEKRRTEEALPEVTPANVSGGGGSKSELVITWETVPEELQNGRGFGYVVAFRPYGKMIWMLTVLASADASRYVFRNESVHPFSPFEVKVGVFNNKGEGPFSPTTVVYSAEEEPTKPPASIFARSLSATDIEVFWASPLEKNRGRIQGYEVKYWRHEDKEENARKIRTVGNQTSTKITNLKGSVLYHLAVKAYNSAGTGPSSATVNVTTRKPPPSQPPGNIIWNSSDSKIILNWDQVKALDNESEVKGYKVLYRWNRQSSTSVIETNKTSVELSLPFDEDYIIEIKPFSDGGDGSSSEQIRIPKISNAYARGSGASTSNACTLSAISTIMISLTARSSL.

The N-terminal stretch at 1-18 (MRLPWELLVLQSFILCLA) is a signal peptide. Ig-like C2-type domains are found at residues 32–117 (PSPV…AKLQ), 122–207 (DNFK…KVLG), 225–311 (PKIE…GQLT), 316–400 (PNWI…AELS), 406–493 (PDFS…GNLV), and 497–586 (PTRV…DRLS). 6 disulfide bridges follow: C50–C100, C144–C194, C247–C295, C337–C384, C429–C477, and C519–C576. 3 N-linked (GlcNAc...) asparagine glycosylation sites follow: N65, N90, and N191. N-linked (GlcNAc...) asparagine glycans are attached at residues N370, N375, and N466. Fibronectin type-III domains lie at 599-697 (PPEA…TEEA), 702-799 (TPAN…SAEE), 804-899 (PPAS…TRKP), and 900-995 (PPSQ…ISNA). The disordered stretch occupies residues 685–710 (PSRPSEKRRTEEALPEVTPANVSGGG). A compositionally biased stretch (basic and acidic residues) spans 687–696 (RPSEKRRTEE). 7 N-linked (GlcNAc...) asparagine glycosylation sites follow: N705, N764, N858, N893, N911, N929, and N954. Residues 886–896 (GPSSATVNVTT) are compositionally biased toward polar residues. Residues 886–907 (GPSSATVNVTTRKPPPSQPPGN) form a disordered region. Residue S1000 is the site of GPI-anchor amidated serine attachment. The propeptide at 1001 to 1026 (GASTSNACTLSAISTIMISLTARSSL) is removed in mature form.

Belongs to the immunoglobulin superfamily. Contactin family. In terms of assembly, interacts with PTPRG. Mainly expressed in brain. Highly expressed in cerebellum and weakly expressed in corpus callosum, caudate nucleus, amygdala and spinal cord. Also expressed in testis, pancreas, thyroid, uterus, small intestine and kidney. Not expressed in skeletal muscle. Isoform 2 is weakly expressed in cerebral cortex.

The protein resides in the cell membrane. Its subcellular location is the secreted. Functionally, contactins mediate cell surface interactions during nervous system development. Has some neurite outgrowth-promoting activity. May be involved in synaptogenesis. In Homo sapiens (Human), this protein is Contactin-4 (CNTN4).